A 140-amino-acid polypeptide reads, in one-letter code: Peptide methionine sulfoxide reductase MsrB (140 aa).

The MsrB domain maps to 9-131 (DALWREKLTP…NSASIVLDSE (123 aa)). Residues Cys-48, Cys-51, Cys-97, and Cys-100 each coordinate Zn(2+). Cys-120 (nucleophile) is an active-site residue.

The protein belongs to the MsrB Met sulfoxide reductase family. Zn(2+) serves as cofactor.

It catalyses the reaction L-methionyl-[protein] + [thioredoxin]-disulfide + H2O = L-methionyl-(R)-S-oxide-[protein] + [thioredoxin]-dithiol. The polypeptide is Peptide methionine sulfoxide reductase MsrB (Cellvibrio japonicus (strain Ueda107) (Pseudomonas fluorescens subsp. cellulosa)).